Reading from the N-terminus, the 93-residue chain is Putative regulatory protein Amet_2791 (93 aa).

This sequence belongs to the RemA family.

The polypeptide is Putative regulatory protein Amet_2791 (Alkaliphilus metalliredigens (strain QYMF)).